A 348-amino-acid chain; its full sequence is MDQMEVPDNDKNRKYPTKDLKIILPKTYADVNSKKGPEYWDYENITLKWNVPDSYEIVRKIGRGKFSEVFEGLNTVTKDKCVIKILKPVKKKKIKREIKILQNLRGGPNIIKLLDIVKDPQSRTPSLIFEHVNNTDFKTLYPTLTIQDIKYYIYQLLKAMNYCHSQGIMHRDIKPHNVMIDHEKKILRLIDWGLAEFYHPEQEYSVRVATRYYKGPELLVDMRYYDYSLDIWSIGCMLAGIIFKKEPFFYGHDNYDQLVKIAKVLGTEDLHRYFEKYGLKFAPAYQEILGNHSKKPWTKFVHHENQHLVSPEVMDLLDRMLVYDHTKRITPLEAMEHPFFNEIKNNSV.

A Protein kinase domain is found at 55–340; that stretch reads YEIVRKIGRG…PLEAMEHPFF (286 aa). Residues 61-69 and K84 contribute to the ATP site; that span reads IGRGKFSEV. Residue D172 is the Proton acceptor of the active site.

Belongs to the protein kinase superfamily. Ser/Thr protein kinase family. CK2 subfamily. As to quaternary structure, tetramer of two alpha and two beta chains.

The protein localises to the cytoplasm. The catalysed reaction is L-seryl-[protein] + ATP = O-phospho-L-seryl-[protein] + ADP + H(+). It carries out the reaction L-threonyl-[protein] + ATP = O-phospho-L-threonyl-[protein] + ADP + H(+). Its function is as follows. Casein kinases are operationally defined by their preferential utilization of acidic proteins such as caseins as substrates. The alpha chain contains the catalytic site. This chain is Casein kinase II subunit alpha, found in Theileria annulata.